Consider the following 243-residue polypeptide: Putative ABC transporter arginine-binding protein 2 (243 aa).

A signal peptide spans 1 to 19; sequence MKKVLIAALIAGFSLSATA.

Belongs to the bacterial solute-binding protein 3 family. As to quaternary structure, the complex is composed of two ATP-binding proteins (ArtP), two transmembrane proteins (ArtM and ArtQ) and two solute-binding proteins (ArtJ and ArtI).

It is found in the periplasm. Functionally, part of the ABC transporter complex ArtPIQMJ involved in arginine transport. The sequence is that of Putative ABC transporter arginine-binding protein 2 (artI) from Escherichia coli (strain K12).